The sequence spans 109 residues: Nucleoid-associated protein Sama_1311 (109 aa).

The protein belongs to the YbaB/EbfC family. Homodimer.

It is found in the cytoplasm. The protein localises to the nucleoid. Binds to DNA and alters its conformation. May be involved in regulation of gene expression, nucleoid organization and DNA protection. The protein is Nucleoid-associated protein Sama_1311 of Shewanella amazonensis (strain ATCC BAA-1098 / SB2B).